The sequence spans 442 residues: 3-isopropylmalate dehydratase large subunit (442 aa).

Positions 347, 407, and 410 each coordinate [4Fe-4S] cluster.

It belongs to the aconitase/IPM isomerase family. LeuC type 1 subfamily. Heterodimer of LeuC and LeuD. Requires [4Fe-4S] cluster as cofactor.

The catalysed reaction is (2R,3S)-3-isopropylmalate = (2S)-2-isopropylmalate. The protein operates within amino-acid biosynthesis; L-leucine biosynthesis; L-leucine from 3-methyl-2-oxobutanoate: step 2/4. In terms of biological role, catalyzes the isomerization between 2-isopropylmalate and 3-isopropylmalate, via the formation of 2-isopropylmaleate. In Buchnera aphidicola subsp. Uroleucon helianthicola, this protein is 3-isopropylmalate dehydratase large subunit.